The following is a 256-amino-acid chain: NAD(P)H-hydrate epimerase (256 aa).

Basic and acidic residues predominate over residues 1–18 (MADPRRDPAAESKDRPST). The interval 1–21 (MADPRRDPAAESKDRPSTERV) is disordered. The YjeF N-terminal domain maps to 23–229 (AYTADAVRAA…DLGLEPYLRR (207 aa)). 74–78 (DNGGD) is a binding site for (6S)-NADPHX. Residues asparagine 75 and aspartate 135 each contribute to the K(+) site. (6S)-NADPHX contacts are provided by residues 139–147 (GIGRLADRR) and aspartate 172. Position 175 (serine 175) interacts with K(+).

It belongs to the NnrE/AIBP family. K(+) is required as a cofactor.

It carries out the reaction (6R)-NADHX = (6S)-NADHX. The catalysed reaction is (6R)-NADPHX = (6S)-NADPHX. In terms of biological role, catalyzes the epimerization of the S- and R-forms of NAD(P)HX, a damaged form of NAD(P)H that is a result of enzymatic or heat-dependent hydration. This is a prerequisite for the S-specific NAD(P)H-hydrate dehydratase to allow the repair of both epimers of NAD(P)HX. The protein is NAD(P)H-hydrate epimerase of Microbacterium testaceum (strain StLB037).